The chain runs to 272 residues: Aquaporin-1 (272 aa).

Topologically, residues 1–11 (MASEFKKKLFW) are cytoplasmic. A helical membrane pass occupies residues 12–29 (RAVVAEFLAMILFIFISI). Over 30 to 48 (GSALGFHYPIKSNQTTGAV) the chain is Extracellular. Asparagine 42 carries an N-linked (GlcNAc...) asparagine glycan. The helical transmembrane segment at 49-67 (QDNVKVSLAFGLSIATLAQ) threads the bilayer. At 68 to 70 (SVG) the chain is on the cytoplasmic side. Residues 71-84 (HISGAHLNPAVTLG) lie within the membrane without spanning it. Positions 78–80 (NPA) match the NPA 1 motif. Residues 85-92 (LLLSCQIS) are Cytoplasmic-facing. A helical transmembrane segment spans residues 93-111 (ILRAIMYIIAQCVGAIVAT). Residues 112 to 135 (VILSGITSSLPDNSLGLNALAPGV) are Extracellular-facing. The chain crosses the membrane as a helical span at residues 136 to 155 (NSGQGLGIEIIGTLQLVLCV). Residues 156–166 (LATTDRRRRRD) lie on the Cytoplasmic side of the membrane. Residues 167–184 (LGDSGPLAIGFSVALGHL) form a helical membrane-spanning segment. Topologically, residues 185-189 (LAIDY) are extracellular. An intramembrane segment occupies 190–202 (TGCGINPARSFGS). The NPA 2 signature appears at 195–197 (NPA). At 203 to 209 (SVITHNF) the chain is on the extracellular side. Residues 210–227 (QDHWIFWVGPFIGAALAV) form a helical membrane-spanning segment. Residues 228-272 (LIYDFILAPRSSDLTDRVKVWTSGQVEEYDLDADDINSRVEMKPK) are Cytoplasmic-facing. Serine 250 is subject to Phosphoserine. A Phosphotyrosine modification is found at tyrosine 256. The residue at position 265 (serine 265) is a Phosphoserine.

This sequence belongs to the MIP/aquaporin (TC 1.A.8) family. As to quaternary structure, homotetramer; each monomer provides an independent water pore. Component of the ankyrin-1 complex in the erythrocyte, composed of ANK1, RHCE, RHAG, SLC4A1, EPB42, GYPA, GYPB and AQP1. Interacts with EPHB2; involved in endolymph production in the inner ear. Identified in a complex with STOM. Interacts (via the N-terminal) with ANK1 (via ANK 1-5 repeats). Interacts (via the C-terminal) with EPB42. In terms of tissue distribution, detected in fetal kidney (at protein level). Detected in fetal kidney.

It is found in the cell membrane. It carries out the reaction H2O(in) = H2O(out). It catalyses the reaction nitric oxide(out) = nitric oxide(in). The catalysed reaction is CO2(out) = CO2(in). The enzyme catalyses glycerol(in) = glycerol(out). It carries out the reaction H2O2(out) = H2O2(in). It catalyses the reaction K(+)(in) = K(+)(out). The catalysed reaction is Na(+)(in) = Na(+)(out). In terms of biological role, forms a water channel that facilitates the transport of water across cell membranes, playing a crucial role in water homeostasis in various tissues. Could also be permeable to small solutes including hydrogen peroxide, glycerol and gases such as amonnia (NH3), nitric oxide (NO) and carbon dioxide (CO2). Recruited to the ankyrin-1 complex, a multiprotein complex of the erythrocyte membrane, it could be part of a CO2 metabolon, linking facilitated diffusion of CO2 across the membrane, anion exchange of Cl(-)/HCO3(-) and interconversion of dissolved CO2 and carbonic acid in the cytosol. In vitro, it shows non-selective gated cation channel activity and may be permeable to cations like K(+) and Na(+) in vivo. In Ovis aries (Sheep), this protein is Aquaporin-1.